Reading from the N-terminus, the 466-residue chain is ATP-dependent protease ATPase subunit ClpY (466 aa).

Residues Ile-20 and 62 to 67 each bind ATP; that span reads GVGKTE. Residues 153–177 form a disordered region; sequence MLFGGSDEDDRDRDQSSEEVELEST. A compositionally biased stretch (acidic residues) spans 158–174; the sequence is SDEDDRDRDQSSEEVEL. Residues Asp-279, Glu-344, and Arg-416 each coordinate ATP.

It belongs to the ClpX chaperone family. HslU subfamily. A double ring-shaped homohexamer of ClpQ is capped on each side by a ring-shaped ClpY homohexamer. The assembly of the ClpQ/ClpY complex is dependent on binding of ATP.

It is found in the cytoplasm. Functionally, ATPase subunit of a proteasome-like degradation complex; this subunit has chaperone activity. The chain is ATP-dependent protease ATPase subunit ClpY (clpY) from Bacillus pumilus (strain SAFR-032).